The following is a 444-amino-acid chain: Acyl-CoA 6-desaturase (444 aa).

The Cytoplasmic segment spans residues 1 to 130; sequence MGKGGNQGEG…EDMNLFKTNH (130 aa). The Cytochrome b5 heme-binding domain maps to 18–95; it reads MPTFRWEEIQ…LKPLLIGELA (78 aa). The helical transmembrane segment at 131–151 threads the bilayer; that stretch reads LFFFLLLSHIIVMESIAWFIL. Residues 152–157 are Lumenal-facing; that stretch reads SYFGNG. A helical transmembrane segment spans residues 158–178; it reads WIPTVITAFVLATSQAQAGWL. Over 179 to 264 the chain is Cytoplasmic; that stretch reads QHDYGHLSVY…KYLPYNHQHE (86 aa). The short motif at 180–184 is the Histidine box-1 element; it reads HDYGH. The Histidine box-2 signature appears at 217 to 221; sequence HFQHH. A helical membrane pass occupies residues 265–285; the sequence is YFFLIGPPLLIPMYFQYQIIM. Over 286–305 the chain is Lumenal; the sequence is TMIRRRDWVDLAWAISYYAR. A helical transmembrane segment spans residues 306–326; the sequence is FFYTYIPFYGILGALVFLNFI. Residues 327–444 lie on the Cytoplasmic side of the membrane; sequence RFLESHWFVW…ELWLDAYLHK (118 aa). Positions 382 to 386 match the Histidine box-3 motif; the sequence is QIEHH.

This sequence belongs to the fatty acid desaturase type 1 family. Expressed in the liver and brain (at protein level). Highest activity is found in the liver and adrenals followed by the testes and other organs, absent in adipose tissue.

The protein resides in the endoplasmic reticulum membrane. It is found in the microsome membrane. It catalyses the reaction (9Z,12Z)-octadecadienoyl-CoA + 2 Fe(II)-[cytochrome b5] + O2 + 2 H(+) = (6Z,9Z,12Z)-octadecatrienoyl-CoA + 2 Fe(III)-[cytochrome b5] + 2 H2O. The catalysed reaction is (9Z,12Z,15Z)-octadecatrienoyl-CoA + 2 Fe(II)-[cytochrome b5] + O2 + 2 H(+) = (6Z,9Z,12Z,15Z)-octadecatetraenoyl-CoA + 2 Fe(III)-[cytochrome b5] + 2 H2O. The enzyme catalyses (9Z,12Z,15Z,18Z,21Z)-tetracosapentaenoyl-CoA + 2 Fe(II)-[cytochrome b5] + O2 + 2 H(+) = (6Z,9Z,12Z,15Z,18Z,21Z)-tetracosahexaenoyl-CoA + 2 Fe(III)-[cytochrome b5] + 2 H2O. It carries out the reaction (11E)-octadecenoyl-CoA + 2 Fe(II)-[cytochrome b5] + O2 + 2 H(+) = (6Z,11E)-octadecadienoyl-CoA + 2 Fe(III)-[cytochrome b5] + 2 H2O. It catalyses the reaction (11Z,14Z)-eicosadienoyl-CoA + 2 Fe(II)-[cytochrome b5] + O2 + 2 H(+) = (8Z,11Z,14Z)-eicosatrienoyl-CoA + 2 Fe(III)-[cytochrome b5] + 2 H2O. The catalysed reaction is (11Z,14Z,17Z)-eicosatrienoyl-CoA + 2 Fe(II)-[cytochrome b5] + O2 + 2 H(+) = (8Z,11Z,14Z,17Z)-eicosatetraenoyl-CoA + 2 Fe(III)-[cytochrome b5] + 2 H2O. It participates in lipid metabolism; polyunsaturated fatty acid biosynthesis. Involved in the biosynthesis of highly unsaturated fatty acids (HUFA) from the essential polyunsaturated fatty acids (PUFA) linoleic acid (LA) (18:2n-6) and alpha-linolenic acid (ALA) (18:3n-3) precursors, acting as a fatty acyl-coenzyme A (CoA) desaturase that introduces a cis double bond at carbon 6 of the fatty acyl chain. Catalyzes the first and rate limiting step in this pathway which is the desaturation of LA (18:2n-6) and ALA (18:3n-3) into gamma-linoleate (GLA) (18:3n-6) and stearidonate (18:4n-3), respectively. Subsequently, in the biosynthetic pathway of HUFA n-3 series, it desaturates tetracosapentaenoate (24:5n-3) to tetracosahexaenoate (24:6n-3), which is then converted to docosahexaenoate (DHA)(22:6n-3), an important lipid for nervous system function. It can also desaturate (11E)-octadecenoate (trans-vaccenoate) at carbon 6 generating (6Z,11E)-octadecadienoate. In addition to Delta-6 activity, this enzyme exhibits Delta-8 activity with slight biases toward n-3 fatty acyl-CoA substrates. The polypeptide is Acyl-CoA 6-desaturase (Fads2) (Rattus norvegicus (Rat)).